We begin with the raw amino-acid sequence, 503 residues long: Capsanthin/capsorubin synthase, chromoplastic (503 aa).

88–117 is a binding site for NAD(+); that stretch reads VIIIGTGPAGLRLAEQVSSRHSVKVCCVDP.

It belongs to the lycopene cyclase family.

Its subcellular location is the plastid. It localises to the chromoplast. The enzyme catalyses all-trans-violaxanthin = all-trans-capsorubin. It catalyses the reaction all-trans-antheraxanthin = all-trans-capsanthin. It functions in the pathway carotenoid biosynthesis; capsanthin biosynthesis; capsanthin from antheraxanthin: step 1/1. Its pathway is carotenoid biosynthesis; capsorubin biosynthesis; capsorubin from violaxanthin: step 1/1. Its function is as follows. Catalyzes the conversion of the ubiquitous 5,6-epoxycarotenoids, antheraxanthin and violaxanthin, into capsanthin and capsorubin, respectively. The chain is Capsanthin/capsorubin synthase, chromoplastic (CCS) from Citrus sinensis (Sweet orange).